The primary structure comprises 104 residues: Alpha-amylase inhibitor HOE-467A (104 aa).

Residues 1 to 30 (MRVRALRLAALVGAGAALALSPLAAGPASA) form the signal peptide. Intrachain disulfides connect Cys41/Cys57 and Cys75/Cys103.

Inhibits mammalian alpha-amylases specifically but has no action on plant and microbial alpha-amylases. Forms a tight stoichiometric 1:1 complex with alpha-amylase. The polypeptide is Alpha-amylase inhibitor HOE-467A (Streptomyces tendae).